The chain runs to 317 residues: Melanocyte-stimulating hormone receptor (317 aa).

The Extracellular segment spans residues 1-37 (MPMQEPQRRLLDPFNSTRTGTPHLKLSANQTGPWCLH). N-linked (GlcNAc...) asparagine glycans are attached at residues asparagine 15 and asparagine 29. The helical transmembrane segment at 38 to 63 (VSIPDGLFLSLGLVSLVENVLVVISI) threads the bilayer. Residues 64–72 (AKNRNLHSP) lie on the Cytoplasmic side of the membrane. Residues 73 to 93 (MYYFICCLALSDLLVSVSIVL) traverse the membrane as a helical segment. Over 94–118 (ETTLILVLEAGALATRVTVVQQLDN) the chain is Extracellular. The chain crosses the membrane as a helical span at residues 119 to 140 (VIDVLICGSMVSSLCFLGAIAV). Topologically, residues 141–163 (DRYISIFYALRYHSIVTLPRARW) are cytoplasmic. Residues 164-183 (AIVAIWVASISSSTLFVAYY) traverse the membrane as a helical segment. Residues 184–191 (NHTAVLLC) lie on the Extracellular side of the membrane. A helical membrane pass occupies residues 192–211 (LVTFFLATLALMAVLYVHML). The Cytoplasmic segment spans residues 212–240 (ARAHQHAQAIAQLHKRQHLVHQGFRLKGA). The helical transmembrane segment at 241 to 266 (ATLTILLGIFFLCWGPFFLYLTLIVL) threads the bilayer. Residues 267 to 279 (CPKHPTCSCFFKN) are Extracellular-facing. A helical transmembrane segment spans residues 280–300 (LNLFLALIIFNSIVDPLIYAF). Topologically, residues 301–317 (RSQELRMTLKEVLLCSW) are cytoplasmic. Cysteine 315 is lipidated: S-palmitoyl cysteine.

The protein belongs to the G-protein coupled receptor 1 family. Interacts with MGRN1, but does not undergo MGRN1-mediated ubiquitination; this interaction competes with GNAS-binding and thus inhibits agonist-induced cAMP production. Interacts with OPN3; the interaction results in a decrease in MC1R-mediated cAMP signaling and ultimately a decrease in melanin production in melanocytes.

It is found in the cell membrane. Functionally, receptor for MSH (alpha, beta and gamma) and ACTH. The activity of this receptor is mediated by G proteins which activate adenylate cyclase. Mediates melanogenesis, the production of eumelanin (black/brown) and phaeomelanin (red/yellow), via regulation of cAMP signaling in melanocytes. This chain is Melanocyte-stimulating hormone receptor (MC1R), found in Chaetodipus baileyi (Bailey's pocket mouse).